The chain runs to 466 residues: Peptidoglycan-N-acetylglucosamine deacetylase PgdA (466 aa).

Residues 1–5 (MKIRW) are Cytoplasmic-facing. The chain crosses the membrane as a helical span at residues 6-26 (IRLSLVAILIIAVVFIGVIGF). The Extracellular portion of the chain corresponds to 27–466 (QKYQFSKSRN…FDKTDSRMVK (440 aa)). One can recognise a NodB homology domain in the interval 266–440 (KRIALTFDDG…KLKSQGYEFV (175 aa)). Asp-273 acts as the Proton acceptor in catalysis. Positions 274, 324, and 328 each coordinate Zn(2+). Substrate is bound at residue Tyr-365. The active-site Proton donor is His-415.

As to quaternary structure, homodimer. Interacts (via transmembrane domain) with PbpA1 (via transmembrane domain); the interaction is important for the peptidoglycan N-deacetylase function of this protein. The cofactor is Zn(2+).

Its subcellular location is the cell membrane. The protein resides in the secreted. It localises to the cell wall. The enzyme catalyses peptidoglycan-N-acetyl-D-glucosamine + H2O = peptidoglycan-D-glucosamine + acetate.. Functionally, catalyzes the deacetylation of N-acetylglucosamine (GlcNAc) residues in peptidoglycan (PG). Also deacetylates N-acetylated PG. Does not deacetylate N-acetylmuramic acid. Confers host lysozyme resistance. Critical for virulence and escape from innate immune response of the host. Required for intracellular survival of bacteria in macrophages of the host. Required for successful host colonization. Controls the production of inflammatory mediators in the bone marrow derived macrophages (BMMs) of the infected mouse. Suppresses Toll-like receptor 2 (TLR2)-dependent secretion of interleukin 6 (IL-6) and interferon-beta (IFN-beta) in the macrophages of the infected mouse. May decrease accessibility of pattern recognition receptors (PRRs) such as nucleotide-binding oligomerization domain protein (NOD) 1 of the host to the bacterial cell wall components. Protects cells from autolysis induced by lysozyme or by other autolysis-inducing agents. The polypeptide is Peptidoglycan-N-acetylglucosamine deacetylase PgdA (Listeria monocytogenes serotype 1/2a (strain 10403S)).